Reading from the N-terminus, the 122-residue chain is Serum amyloid A-1 protein (122 aa).

A signal peptide spans 1-18 (MKLLTGLVFCSLVLGVSS). The interval 19 to 45 (RSFFSFLGEAFDGARDMWRAYSDMREA) is important for amyloid formation; forms amyloid fibrils in vitro. The propeptide at 95 to 122 (LADQAANEWGRSGKDPNHFRPAGLPEKY) is often cleaved during amyloidogenesis. A disordered region spans residues 98–122 (QAANEWGRSGKDPNHFRPAGLPEKY). At Asn101 the chain carries N4,N4-dimethylasparagine.

It belongs to the SAA family. Homohexamer; dimer of trimers. Can form amyloid fibrils after partial proteolysis; the native, undenatured protein does not form amyloid fibrils (in vitro). Apolipoprotein of the HDL complex. Binds to heparin. This protein is the precursor of amyloid protein A, which is formed by the removal of approximately 24 residues from the C-terminal end. As to expression, expressed by the liver; secreted in plasma (at protein level).

The protein localises to the secreted. Functionally, major acute phase protein. The protein is Serum amyloid A-1 protein (SAA1) of Homo sapiens (Human).